Consider the following 289-residue polypeptide: Diaminopimelate epimerase (289 aa).

N15 and N76 together coordinate substrate. Catalysis depends on C85, which acts as the Proton donor. Residues 86–87 (GN), N158, N191, and 209–210 (ER) each bind substrate. C218 functions as the Proton acceptor in the catalytic mechanism. Position 219–220 (219–220 (GT)) interacts with substrate.

Belongs to the diaminopimelate epimerase family. Homodimer.

It localises to the cytoplasm. It carries out the reaction (2S,6S)-2,6-diaminopimelate = meso-2,6-diaminopimelate. It participates in amino-acid biosynthesis; L-lysine biosynthesis via DAP pathway; DL-2,6-diaminopimelate from LL-2,6-diaminopimelate: step 1/1. Functionally, catalyzes the stereoinversion of LL-2,6-diaminopimelate (L,L-DAP) to meso-diaminopimelate (meso-DAP), a precursor of L-lysine and an essential component of the bacterial peptidoglycan. The protein is Diaminopimelate epimerase of Streptomyces coelicolor (strain ATCC BAA-471 / A3(2) / M145).